Here is a 237-residue protein sequence, read N- to C-terminus: uncharacterized protein (237 aa).

Residues 1 to 26 (MKRIRDVLSHENSNNTNYSDTNDTDY) are disordered. A compositionally biased stretch (low complexity) spans 12–21 (NSNNTNYSDT).

Belongs to the mimivirus R160 family.

This is an uncharacterized protein from Acanthamoeba polyphaga mimivirus (APMV).